Reading from the N-terminus, the 562-residue chain is Dihydroxy-acid dehydratase (562 aa).

Aspartate 80 provides a ligand contact to Mg(2+). Residue cysteine 121 participates in [2Fe-2S] cluster binding. The Mg(2+) site is built by aspartate 122 and lysine 123. N6-carboxylysine is present on lysine 123. Cysteine 194 provides a ligand contact to [2Fe-2S] cluster. Glutamate 446 is a Mg(2+) binding site. Serine 472 functions as the Proton acceptor in the catalytic mechanism.

Belongs to the IlvD/Edd family. In terms of assembly, homodimer. It depends on [2Fe-2S] cluster as a cofactor. The cofactor is Mg(2+).

The enzyme catalyses (2R)-2,3-dihydroxy-3-methylbutanoate = 3-methyl-2-oxobutanoate + H2O. The catalysed reaction is (2R,3R)-2,3-dihydroxy-3-methylpentanoate = (S)-3-methyl-2-oxopentanoate + H2O. The protein operates within amino-acid biosynthesis; L-isoleucine biosynthesis; L-isoleucine from 2-oxobutanoate: step 3/4. It functions in the pathway amino-acid biosynthesis; L-valine biosynthesis; L-valine from pyruvate: step 3/4. Its function is as follows. Functions in the biosynthesis of branched-chain amino acids. Catalyzes the dehydration of (2R,3R)-2,3-dihydroxy-3-methylpentanoate (2,3-dihydroxy-3-methylvalerate) into 2-oxo-3-methylpentanoate (2-oxo-3-methylvalerate) and of (2R)-2,3-dihydroxy-3-methylbutanoate (2,3-dihydroxyisovalerate) into 2-oxo-3-methylbutanoate (2-oxoisovalerate), the penultimate precursor to L-isoleucine and L-valine, respectively. The polypeptide is Dihydroxy-acid dehydratase (Staphylococcus epidermidis (strain ATCC 35984 / DSM 28319 / BCRC 17069 / CCUG 31568 / BM 3577 / RP62A)).